A 115-amino-acid chain; its full sequence is MIPGEYVLGSTPVVINAGRDAIDVVVVNTGDRPVQVGSHYHFAEANAALAFDRAAAYGRRLDIPAGTAARFEPGDSKTVRLIELAGSREVYGLSNAVNGTLDAGNARQEAKTEAK.

This sequence belongs to the urease beta subunit family. Heterotrimer of UreA (gamma), UreB (beta) and UreC (alpha) subunits. Three heterotrimers associate to form the active enzyme.

The protein resides in the cytoplasm. The enzyme catalyses urea + 2 H2O + H(+) = hydrogencarbonate + 2 NH4(+). Its pathway is nitrogen metabolism; urea degradation; CO(2) and NH(3) from urea (urease route): step 1/1. This is Urease subunit beta from Arthrobacter sp. (strain FB24).